Here is a 579-residue protein sequence, read N- to C-terminus: Copine-E (579 aa).

C2 domains follow at residues 45-175 and 183-304; these read IDPS…KVIG and QTGT…EFTL. Asp-80, Asp-86, Asp-145, Asp-147, and Asp-153 together coordinate Ca(2+). A VWFA domain is found at 345–552; sequence NLMIAIDCTA…KKYENDPEQL (208 aa).

This sequence belongs to the copine family. Ca(2+) serves as cofactor.

The chain is Copine-E (cpnE) from Dictyostelium discoideum (Social amoeba).